Reading from the N-terminus, the 320-residue chain is Olfactory receptor 2AT4 (320 aa).

The Extracellular segment spans residues 1 to 31 (MDATACNESVDGSPVFYLLGIPSLPETFFLP). N7 carries an N-linked (GlcNAc...) asparagine glycan. The chain crosses the membrane as a helical span at residues 32-52 (VFFIFLLFYLLILMGNALILV). Residues 53–62 (AVVAEPSLHK) lie on the Cytoplasmic side of the membrane. Residues 63–83 (PMYFFLINLSTLDILFTTTTV) form a helical membrane-spanning segment. Over 84–102 (PKMLSLFLLGDRFLSFSSC) the chain is Extracellular. A disulfide bridge connects residues C102 and C184. A helical transmembrane segment spans residues 103–123 (LLQMYLFQSFTCSEAFILVVM). Over 124–145 (AYDRYVAICHPLHYPVLMNPQT) the chain is Cytoplasmic. The helical transmembrane segment at 146–166 (NATLAASAWLTALLLPIPAVV) threads the bilayer. Topologically, residues 167-200 (RTSQMAYNSIAYIYHCFCDHLAVVQASCSDTTPQ) are extracellular. Residues 201–221 (TLMGFCIAMVVSFLPLLLVLL) traverse the membrane as a helical segment. Residues 222 to 245 (SYVHILASVLRISSLEGRAKAFST) lie on the Cytoplasmic side of the membrane. A helical membrane pass occupies residues 246–266 (CSSHLLVVGTYYSSIAIAYVA). Residues 267–276 (YRADLPLDFH) are Extracellular-facing. The chain crosses the membrane as a helical span at residues 277-297 (IMGNVVYAILTPILNPLIYTL). Residues 298–320 (RNRDVKAAITKIMSQDPGCDRSI) lie on the Cytoplasmic side of the membrane.

It belongs to the G-protein coupled receptor 1 family. In terms of tissue distribution, detected in the keratinocytes of the epidermis (at protein level). Detected in hair follicles in proximal outer root sheath and hair matrix keratinocytes (at protein level).

The protein localises to the cell membrane. Functionally, olfactory receptor. Activated by the synthetic sandalwood odorant sandalore. Endogenous ligand is unknown. The activity of this receptor is probably mediated by G proteins which induce elevation of intracellular Ca(2+), a cAMP-dependent pathway and phosphorylation of MAPK1/ERK2, MAPK3/ERK1 and p38 MAPKs. Activation of OR2AT4 induces proliferation, migration, and re-epithelialization during wound-healing processes of keratinocytes. Stimulation of OR2AT4 by sandalore promotes hair growth by decreasing apoptosis and increasing production of the anagen-prolonging growth factor IGF1 as well as other pathways involving various kinases. The sequence is that of Olfactory receptor 2AT4 from Homo sapiens (Human).